We begin with the raw amino-acid sequence, 771 residues long: Heat shock transcription factor (771 aa).

Residues 1 to 70 form a disordered region; that stretch reads MTTNLYAIAG…GIGISKPGLS (70 aa). Low complexity-rich tracts occupy residues 11–23 and 31–42; these read PSKP…TPSP and LKSLTSLPTNPL. Positions 43–62 are enriched in polar residues; it reads NPQGTSTSNALTNQSSSTGI. A DNA-binding region spans residues 78–168; sequence MKVPAFLNKL…PIELWEFANP (91 aa). A disordered region spans residues 183 to 266; it reads RKNNRLSNSG…PPSHTSAGPL (84 aa). Low complexity-rich tracts occupy residues 189–199 and 212–233; these read SNSGVGSSSSL and SASA…ISQG. Residues 238-262 show a composition bias toward polar residues; the sequence is NHSTSGKYLITDGTTPGSAPPSHTS. The interval 280-333 is involved in trimerization; it reads GIAAIRQTQASIATDLRKLQASNEALWRQAYETQEKQRKHEETIDLIVSFLERL. Composition is skewed to basic and acidic residues over residues 350–372 and 399–415; these read RGVG…ARFA and TGEH…DRLV. 3 disordered regions span residues 350–513, 590–634, and 708–771; these read RGVG…SSNA, QALT…GSGT, and SGVG…SGLK. A compositionally biased stretch (polar residues) spans 418–448; that stretch reads GSNSEYSIPSVKRTSSSSHPLSLGQLGSSRF. 2 stretches are compositionally biased toward low complexity: residues 497–511 and 599–620; these read LSPL…PSSS and HNPS…SASA.

It belongs to the HSF family. Homotrimer. Homotrimerization increases the affinity of HSF1 to DNA. Interacts with transcriptional coregulator SSA1 on chromatin. Phosphorylated at high temperature.

It is found in the nucleus. In terms of biological role, DNA-binding transcription factor that specifically binds heat shock promoter elements (HSE) and activates transcription. Promotes thermotolerance by transiently regulating a subset of genes. Induces expression of STI, SSA1, SSA2, HSP78 and KAR2 during the heat response. This Cryptococcus neoformans var. grubii serotype A (strain H99 / ATCC 208821 / CBS 10515 / FGSC 9487) (Filobasidiella neoformans var. grubii) protein is Heat shock transcription factor.